The following is a 155-amino-acid chain: Endoribonuclease YbeY (155 aa).

Residues H114, H118, and H124 each coordinate Zn(2+).

It belongs to the endoribonuclease YbeY family. It depends on Zn(2+) as a cofactor.

The protein resides in the cytoplasm. Single strand-specific metallo-endoribonuclease involved in late-stage 70S ribosome quality control and in maturation of the 3' terminus of the 16S rRNA. The chain is Endoribonuclease YbeY from Tolumonas auensis (strain DSM 9187 / NBRC 110442 / TA 4).